Reading from the N-terminus, the 967-residue chain is Phosphoenolpyruvate carboxylase (967 aa).

A Phosphoserine modification is found at serine 10. Catalysis depends on residues histidine 171 and lysine 601. The segment at 915 to 936 is disordered; it reads NASRLPLSRESPEATKPADELV. Residues 924–933 are compositionally biased toward basic and acidic residues; that stretch reads ESPEATKPAD.

This sequence belongs to the PEPCase type 1 family. In terms of assembly, homotetramer. The cofactor is Mg(2+).

The protein resides in the cytoplasm. The catalysed reaction is oxaloacetate + phosphate = phosphoenolpyruvate + hydrogencarbonate. By light-reversible phosphorylation. Its function is as follows. Through the carboxylation of phosphoenolpyruvate (PEP) it forms oxaloacetate, a four-carbon dicarboxylic acid source for the tricarboxylic acid cycle. This Pisum sativum (Garden pea) protein is Phosphoenolpyruvate carboxylase.